A 388-amino-acid chain; its full sequence is F-box protein ETP2 (388 aa).

One can recognise an F-box domain in the interval 2–48; sequence KTIQEQLPNDLVEEILCRVPATSLRRLRSTCKAWNRLFKGDRILASK.

As to quaternary structure, interacts with EIN2 (via C-terminus).

Its function is as follows. Negative regulator of EIN2 protein stability. This Arabidopsis thaliana (Mouse-ear cress) protein is F-box protein ETP2.